The following is an 83-amino-acid chain: Insect toxin 2-13 (83 aa).

A signal peptide spans 1–21 (MKLLLLLIITASMLIEGLVNA). The LCN-type CS-alpha/beta domain maps to 22–80 (DVYIRRHDGCKISCTVNDKYCDNECKSEGGSYGYCYAFGCWCEGLPNDKAWKSETNTCG). 4 cysteine pairs are disulfide-bonded: C31-C79, C35-C56, C42-C61, and C46-C63. Position 80 is a glycine amide (G80).

It belongs to the long (4 C-C) scorpion toxin superfamily. Sodium channel inhibitor family. Beta subfamily. As to expression, expressed by the venom gland.

Its subcellular location is the secreted. Functionally, depressant insect toxins cause a transient contraction paralysis followed by a slow flaccid paralysis. They bind voltage-independently to sodium channels (Nav) and block action potentials, primarily by depolarizing the axonal membrane and suppressing the sodium current. This Leiurus hebraeus (Hebrew deathstalker scorpion) protein is Insect toxin 2-13.